A 132-amino-acid polypeptide reads, in one-letter code: Ribosome-binding factor A (132 aa).

This sequence belongs to the RbfA family. In terms of assembly, monomer. Binds 30S ribosomal subunits, but not 50S ribosomal subunits or 70S ribosomes.

It localises to the cytoplasm. Functionally, one of several proteins that assist in the late maturation steps of the functional core of the 30S ribosomal subunit. Associates with free 30S ribosomal subunits (but not with 30S subunits that are part of 70S ribosomes or polysomes). Required for efficient processing of 16S rRNA. May interact with the 5'-terminal helix region of 16S rRNA. This Caldicellulosiruptor bescii (strain ATCC BAA-1888 / DSM 6725 / KCTC 15123 / Z-1320) (Anaerocellum thermophilum) protein is Ribosome-binding factor A.